The primary structure comprises 116 residues: NADPH-dependent 7-cyano-7-deazaguanine reductase (116 aa).

Residue Cys31 is the Thioimide intermediate of the active site. The active-site Proton donor is Asp38. Residues 53–55 (VEL) and 72–73 (YE) each bind substrate.

It belongs to the GTP cyclohydrolase I family. QueF type 1 subfamily.

It is found in the cytoplasm. The catalysed reaction is 7-aminomethyl-7-carbaguanine + 2 NADP(+) = 7-cyano-7-deazaguanine + 2 NADPH + 3 H(+). Its pathway is tRNA modification; tRNA-queuosine biosynthesis. Its function is as follows. Catalyzes the NADPH-dependent reduction of 7-cyano-7-deazaguanine (preQ0) to 7-aminomethyl-7-deazaguanine (preQ1). The protein is NADPH-dependent 7-cyano-7-deazaguanine reductase of Chloroherpeton thalassium (strain ATCC 35110 / GB-78).